A 101-amino-acid chain; its full sequence is Pro-corazonin (101 aa).

Residues 1 to 16 form the signal peptide; the sequence is MLVLFVLSLVVSCALC. Asparagine amide is present on N27. The propeptide occupies 31 to 101; sequence SNFPAEISAL…REKAPNNDNY (71 aa).

The protein belongs to the corazonin family. In terms of tissue distribution, expressed in central brain and the retrocerebral complex but not in antennal lobes, optic lobes or in gnathal, thoracic and abdominal ganglia (at protein level).

Its subcellular location is the secreted. In terms of biological role, cardioactive peptide. Corazonin is probably involved in the physiological regulation of the heart beat. This is Pro-corazonin from Camponotus floridanus (Florida carpenter ant).